Reading from the N-terminus, the 701-residue chain is Acetyl-coenzyme A synthetase, cytoplasmic (701 aa).

Residues 1–41 (MGLPEERVRSGSGSRGQEEAGAGGRARSWSPPPEVSRSAHV) are disordered. The interaction with TFEB stretch occupies residues 1-107 (MGLPEERVRS…GATTNICYNV (107 aa)). 3 positions are modified to phosphoserine: Ser-28, Ser-30, and Ser-36. 219–222 (RGEK) is a CoA binding site. Phosphoserine is present on residues Ser-263, Ser-265, and Ser-267. CoA is bound at residue Thr-363. Position 418 is an N6-acetyllysine (Lys-418). ATP contacts are provided by residues 439-441 (GEP), 463-468 (DTFWQT), Asp-552, and Arg-567. 2 residues coordinate CoA: Ser-575 and Arg-636. The short motif at 656 to 668 (KTRSGKIMRRVLR) is the Nuclear localization signal element. Residue Ser-659 is modified to Phosphoserine; by AMPK. Residue Lys-661 is modified to N6-acetyllysine.

This sequence belongs to the ATP-dependent AMP-binding enzyme family. As to quaternary structure, monomer. Interacts with TFEB. AMPK-mediated phosphorylated form at Ser-659 interacts with KPNA1; this interaction results in nuclear translocation of ACSS2. Interacts with the 'Thr-172' phosphorylated form of PRKAA2. Interacts with CREBBP. Reversibly acetylated at Lys-661. The acetyl-CoA synthase activity is inhibited by acetylation and activated by deacetylation mediated by the deacetylases SIRT1 and SIRT3. Post-translationally, glucose deprivation results in its AMPK-dependent phosphorylation at Ser-659, which leads to exposure of its nuclear localization signal, required for its interaction with KPNA1 and subsequent translocation to the nucleus.

It is found in the cytoplasm. It localises to the cytosol. The protein resides in the nucleus. It carries out the reaction acetate + ATP + CoA = acetyl-CoA + AMP + diphosphate. The enzyme catalyses propanoate + ATP + CoA = propanoyl-CoA + AMP + diphosphate. Inhibited by acetylation at Lys-661 and activated by deacetylation mediated by the deacetylases SIRT1 and SIRT3. Functionally, catalyzes the synthesis of acetyl-CoA from short-chain fatty acids. Acetate is the preferred substrate. Can also utilize propionate with a much lower affinity. Nuclear ACSS2 promotes glucose deprivation-induced lysosomal biogenesis and autophagy, tumor cell survival and brain tumorigenesis. Glucose deprivation results in AMPK-mediated phosphorylation of ACSS2 leading to its translocation to the nucleus where it binds to TFEB and locally produces acetyl-CoA for histone acetylation in the promoter regions of TFEB target genes thereby activating their transcription. The regulation of genes associated with autophagy and lysosomal activity through ACSS2 is important for brain tumorigenesis and tumor survival. Acts as a chromatin-bound transcriptional coactivator that up-regulates histone acetylation and expression of neuronal genes. Can be recruited to the loci of memory-related neuronal genes to maintain a local acetyl-CoA pool, providing the substrate for histone acetylation and promoting the expression of specific genes, which is essential for maintaining long-term spatial memory. The chain is Acetyl-coenzyme A synthetase, cytoplasmic (ACSS2) from Homo sapiens (Human).